A 73-amino-acid polypeptide reads, in one-letter code: IGMVVECKDGYLVGNDGCKYSCSTRPGHYCASECSRVKGKDGYCYAWLACYCYNMPNWAPIWNSATNRCRGRK.

The N-terminal stretch at 1 to 7 (IGMVVEC) is a signal peptide. Residues 8 to 70 (KDGYLVGNDG…IWNSATNRCR (63 aa)) form the LCN-type CS-alpha/beta domain. 4 disulfide bridges follow: Cys18/Cys69, Cys22/Cys44, Cys30/Cys50, and Cys34/Cys52. Residue Arg70 is modified to Arginine amide.

This sequence belongs to the long (4 C-C) scorpion toxin superfamily. Sodium channel inhibitor family. Beta subfamily. Expressed by the venom gland.

The protein resides in the secreted. Its function is as follows. Beta toxins bind voltage-independently at site-4 of sodium channels (Nav) and shift the voltage of activation toward more negative potentials thereby affecting sodium channel activation and promoting spontaneous and repetitive firing. The protein is Toxin Td5 of Tityus discrepans (Venezuelan scorpion).